Consider the following 317-residue polypeptide: Anamorsin homolog 2 (317 aa).

An N-terminal SAM-like domain region spans residues 1-162 (MAKKVGVLLF…KPSWDSASVF (162 aa)). The segment at 163–229 (QLRKGSSQKG…EDDLLTEEDL (67 aa)) is linker. Residues C240, C247, C250, and C252 each coordinate [2Fe-2S] cluster. Residues 240 to 252 (CAPTKKACKNCTC) are fe-S binding site A. The [4Fe-4S] cluster site is built by C278, C281, C289, and C292. Short sequence motifs (cx2C motif) lie at residues 278 to 281 (CGSC) and 289 to 292 (CAGC). Residues 278 to 292 (CGSCGLGDAFRCAGC) form a fe-S binding site B region.

This sequence belongs to the anamorsin family. In terms of assembly, monomer. Requires [2Fe-2S] cluster as cofactor. It depends on [4Fe-4S] cluster as a cofactor.

It localises to the cytoplasm. It is found in the mitochondrion intermembrane space. Component of the cytosolic iron-sulfur (Fe-S) protein assembly (CIA) machinery. Required for the maturation of extramitochondrial Fe-S proteins. Part of an electron transfer chain functioning in an early step of cytosolic Fe-S biogenesis, facilitating the de novo assembly of a [4Fe-4S] cluster on the cytosolic Fe-S scaffold complex. Electrons are transferred from NADPH via a FAD- and FMN-containing diflavin oxidoreductase. Together with the diflavin oxidoreductase, also required for the assembly of the diferric tyrosyl radical cofactor of ribonucleotide reductase (RNR), probably by providing electrons for reduction during radical cofactor maturation in the catalytic small subunit. This is Anamorsin homolog 2 from Physcomitrium patens (Spreading-leaved earth moss).